Here is a 1499-residue protein sequence, read N- to C-terminus: Autophagy-related protein 2 (1499 aa).

The segment covering 211-221 (EQSVPSYGSSS) has biased composition (polar residues). Residues 211–237 (EQSVPSYGSSSSDKEDDNTSDSEDPLS) are disordered. Positions 224–234 (KEDDNTSDSED) are enriched in acidic residues.

The protein belongs to the ATG2 family.

The protein localises to the preautophagosomal structure membrane. It localises to the endoplasmic reticulum membrane. It catalyses the reaction a 1,2-diacyl-sn-glycero-3-phosphocholine(in) = a 1,2-diacyl-sn-glycero-3-phosphocholine(out). The catalysed reaction is a 1,2-diacyl-sn-glycero-3-phospho-L-serine(in) = a 1,2-diacyl-sn-glycero-3-phospho-L-serine(out). It carries out the reaction a 1,2-diacyl-sn-glycero-3-phosphoethanolamine(in) = a 1,2-diacyl-sn-glycero-3-phosphoethanolamine(out). Lipid transfer protein required for autophagosome completion and peroxisome degradation. Tethers the edge of the isolation membrane (IM) to the endoplasmic reticulum (ER) and mediates direct lipid transfer from ER to IM for IM expansion. ATG2 binds to the ER exit site (ERES), which is the membrane source for autophagosome formation, using basic residues in its N-terminal region (NR) and to the expanding edge of the IM through its C-terminal region. The latter binding is assisted by an ATG18-PtdIns3P interaction. ATG2 then extracts phospholipids from the membrane source using its NR and transfers them to ATG9 to the IM through its predicted beta-sheet-rich structure for membrane expansion. The protein is Autophagy-related protein 2 of Kluyveromyces marxianus (strain DMKU3-1042 / BCC 29191 / NBRC 104275) (Yeast).